Consider the following 36-residue polypeptide: Dolichyl-diphosphooligosaccharide--protein glycosyltransferase subunit 2 (36 aa).

It belongs to the SWP1 family. In terms of assembly, component of the oligosaccharyltransferase (OST) complex.

The protein resides in the endoplasmic reticulum. The protein localises to the endoplasmic reticulum membrane. It functions in the pathway protein modification; protein glycosylation. Functionally, subunit of the oligosaccharyl transferase (OST) complex that catalyzes the initial transfer of a defined glycan (Glc(3)Man(9)GlcNAc(2) in eukaryotes) from the lipid carrier dolichol-pyrophosphate to an asparagine residue within an Asn-X-Ser/Thr consensus motif in nascent polypeptide chains, the first step in protein N-glycosylation. N-glycosylation occurs cotranslationally and the complex associates with the Sec61 complex at the channel-forming translocon complex that mediates protein translocation across the endoplasmic reticulum (ER). All subunits are required for a maximal enzyme activity. The sequence is that of Dolichyl-diphosphooligosaccharide--protein glycosyltransferase subunit 2 from Gallus gallus (Chicken).